A 565-amino-acid chain; its full sequence is Thiol:disulfide interchange protein DsbD (565 aa).

The first 19 residues, 1–19 (MAQRIFTLILLLCSTSVFA), serve as a signal peptide directing secretion. 2 disulfide bridges follow: C122-C128 and C182-C304. 7 consecutive transmembrane segments (helical) span residues 163–183 (LPFS…TPCV), 208–228 (LLTF…GLVV), 243–263 (YVLI…FGLF), 296–316 (IAGL…LLYI), 323–343 (WLGG…LMLI), 365–385 (FGFV…GDIW), and 386–406 (GLRL…ITSL). Residues 434 to 565 (WAFGATHTAQ…FSAHLRDRQP (132 aa)) enclose the Thioredoxin domain. C480 and C483 are oxidised to a cystine.

Belongs to the thioredoxin family. DsbD subfamily.

The protein localises to the cell inner membrane. The catalysed reaction is [protein]-dithiol + NAD(+) = [protein]-disulfide + NADH + H(+). It carries out the reaction [protein]-dithiol + NADP(+) = [protein]-disulfide + NADPH + H(+). Its function is as follows. Required to facilitate the formation of correct disulfide bonds in some periplasmic proteins and for the assembly of the periplasmic c-type cytochromes. Acts by transferring electrons from cytoplasmic thioredoxin to the periplasm. This transfer involves a cascade of disulfide bond formation and reduction steps. This chain is Thiol:disulfide interchange protein DsbD, found in Shigella dysenteriae serotype 1 (strain Sd197).